A 676-amino-acid polypeptide reads, in one-letter code: GRB2-associated-binding protein 2 (676 aa).

Ser-2 is subject to Phosphoserine. In terms of domain architecture, PH spans 6–117 (DVVCTGWLRK…WVQSICQICG (112 aa)). A disordered region spans residues 127–178 (SLRNVSSAGHGPRSSPAELSSSSQHLLRERKSSAPSHSSQPTLFTFEPPVSN). Ser-133, Ser-140, Ser-141, Ser-148, Ser-149, Ser-159, Ser-164, Ser-210, Ser-218, Ser-223, and Ser-264 each carry phosphoserine. Over residues 140–149 (SSPAELSSSS) the composition is skewed to low complexity. Over residues 159-169 (SAPSHSSQPTL) the composition is skewed to polar residues. A Phosphothreonine modification is found at Thr-265. Position 266 is a phosphotyrosine (Tyr-266). Thr-278 carries the phosphothreonine modification. 2 positions are modified to phosphoserine: Ser-281 and Ser-285. Phosphothreonine is present on Thr-287. Tyr-293 bears the Phosphotyrosine mark. Thr-331 is modified (phosphothreonine). The disordered stretch occupies residues 341-430 (VATPGDSAIA…RSAESMSDGV (90 aa)). The short motif at 351 to 358 (PPPRPPKP) is the SH3-binding element. Ser-368 carries the phosphoserine modification. A phosphothreonine mark is found at Thr-385 and Thr-391. Residue Ser-405 is modified to Phosphoserine. Phosphothreonine is present on Thr-408. Phosphoserine is present on residues Ser-422 and Ser-425. Residue Tyr-452 is modified to Phosphotyrosine. Phosphoserine is present on Ser-480. A disordered region spans residues 492–531 (PSTTLPVHRGPSRGSEIQPPPVNRNLKPDRKAKPTPLDLR). The short motif at 510 to 519 (PPPVNRNLKP) is the SH3-binding element. A Phosphoserine modification is found at Ser-543. Composition is skewed to polar residues over residues 556 to 577 (FNSS…STDS) and 589 to 611 (NPVS…STGS). Disordered regions lie at residues 556-643 (FNSS…KVDY) and 656-676 (NTMQ…GAKL). A phosphoserine mark is found at Ser-622 and Ser-623. The residue at position 643 (Tyr-643) is a Phosphotyrosine. Residues 656-670 (NTMQEWTDVRQSSEP) show a composition bias toward polar residues.

It belongs to the GAB family. As to quaternary structure, part of a complex composed of EEIG1, TNFRSF11A/RANK, PLCG2, GAB2, TEC and BTK; complex formation increases in the presence of TNFSF11/RANKL. Interacts with SHC1; may mediate interaction with receptors. Interacts with SYK. Interacts with PI-3 kinase. Interacts with GRB2 (via SH3 2 domain). Interacts (phosphorylated) with PTPN11. Interacts with TNFRSF11A (via cytoplasmic domain). Interacts (phosphorylated) with 14-3-3 family proteins SFN, YWHAB, YWHAE, YWHAG, YWHAH, YWHAQ and YWHAZ; prevents interaction with GRB2 and attenuates GAB2 signaling. Interacts with HCK. In terms of processing, phosphorylated on tyrosine residue(s) by the thrombopoietin receptor (TPOR), stem cell factor receptor (SCFR), and T-cell and B-cell antigen receptors, gp130, IL-2R and IL-3R. Phosphorylated upon stimulation of TNFRSF11A/RANK by TNFSF11/RANKL. Phosphorylated upon EGF stimulation. Phosphorylated on tyrosine residues by HCK upon IL6 signaling. Dephosphorylated by PTPN11.

Its subcellular location is the cytoplasm. The protein localises to the cell membrane. It localises to the membrane raft. Functionally, adapter protein which acts downstream of several membrane receptors including cytokine, antigen, hormone, cell matrix and growth factor receptors to regulate multiple signaling pathways. Regulates osteoclast differentiation mediating the TNFRSF11A/RANK signaling. In allergic response, it plays a role in mast cells activation and degranulation through PI-3-kinase regulation. Also involved in the regulation of cell proliferation and hematopoiesis. This chain is GRB2-associated-binding protein 2 (GAB2), found in Homo sapiens (Human).